We begin with the raw amino-acid sequence, 452 residues long: MEVKVLSSRLVRPSYPASAAAPEEEFVPSSMFDKVTYDMQMAIIYAFRPPGPSVADIEKGLAAVLGVYRLFAGQVVRGGGGELRGVVLNDHGARLVEACVDGSLADIAPAKPSPVVLRLHPSLEGEIEEVVQVQLTRFACGSLAVGFTANHAVADGHATSDFLVAWGRAARGLAVAATAAAPPHHHPGMFRPRDPPLVEFEHRGVEYYRPPPPAAGVDGDVGGDHKQQHGHGGEEASHGIVIHKAHFTKDFIARLRAAASEGRGRPFSRFETILAHVWRTMTRARGLGNPLQSSTIRISVDGRQRLSAPAGYFGNLVLWAFPRATVGDLLGRPLKHAAQVIHDAVARADAAYFRSFVDFASSGAVEGEGLAPTAVLKDVLCPDLEVDSWLTFPFYELDFGGGCPTYFMPSYFPTEGMLFLVPSYLGDGSVDAFVPVFDHNLEAFKQSCYSIE.

The active-site Proton acceptor is the histidine 151. Residues 213 to 234 form a disordered region; sequence PAAGVDGDVGGDHKQQHGHGGE. Positions 222 to 234 are enriched in basic and acidic residues; sequence GGDHKQQHGHGGE. The Proton acceptor role is filled by aspartate 398.

The protein belongs to the plant acyltransferase family. As to expression, highly expressed in roots. Expressed at low levels in flowers.

Functionally, hydroxycinnamoyl transferase that catalyzes the transfer of an acyl from p-coumaryol-CoA to putrescine, to produce coumaroyl putrescine. Can use feruloyl-CoA, caffeoyl-CoA and sinapoyl-CoA as acyl donors. Seems to be able to transfer the acyl group from feruloyl-CoA to the acyl acceptors agmatine and spermidine. The polypeptide is Putrescine hydroxycinnamoyltransferase (Oryza sativa subsp. japonica (Rice)).